Consider the following 534-residue polypeptide: Origin of replication complex subunit 5 (534 aa).

A disordered region spans residues 1-36 (MPPKEESSKVTRRSTRSSASVTVENSEPIESHTPTI). 83 to 90 (GGASTGKT) is an ATP binding site. Positions 129–136 (HRKCSLNG) match the Nuclear localization signal motif. Positions 397–428 (MFDSTGGMDNRKRKRKASEKSMEKKEIAEQEA) are disordered. Over residues 414 to 424 (SEKSMEKKEIA) the composition is skewed to basic and acidic residues.

The protein belongs to the ORC5 family. Component of the origin recognition complex (ORC) composed of at least ORC1 (ORC1A or ORC1B), ORC2, ORC3, ORC4, ORC5 and ORC6. ORC is regulated in a cell-cycle and development dependent manner. It is sequentially assembled at the exit from anaphase of mitosis and disassembled as cells enter S phase. Interacts directly with ORC1A, ORC1B, ORC2, ORC3, ORC4 and ORC6. In terms of tissue distribution, follow a cell-cycle regulation with a peak at the G1/S-phase. Mostly expressed in flower buds and cauline leaves, and, to a lower exent, in roots, leaves and stems. Expressed at low levels ubiquitously.

The protein localises to the nucleus. Its function is as follows. Component of the origin recognition complex (ORC) that binds origins of replication. DNA-binding is ATP-dependent. The specific DNA sequences that define origins of replication have not been identified yet. ORC is required to assemble the pre-replication complex necessary to initiate DNA replication. The chain is Origin of replication complex subunit 5 from Arabidopsis thaliana (Mouse-ear cress).